The following is a 2016-amino-acid chain: Cell adhesion molecule Dscam1 (2016 aa).

Positions 1–28 (MNMPNERLKWLMLFAAVALIACGSQTLA) are cleaved as a signal peptide. At 29–1618 (ANPPDADQKG…TIRIILSNLN (1590 aa)) the chain is on the extracellular side. Ig-like C2-type domains are found at residues 39 to 134 (PVFL…VHVR), 138 to 230 (AQYY…TRLS), 247 to 338 (PKIN…TVLT), 342 to 421 (PLSA…AELK), 428 to 522 (PPVI…AKLN), 527 to 613 (PYIR…LEVQ), 618 to 712 (PQVL…LQVN), 715 to 807 (PRWI…IMIS), and 812 to 904 (PEFT…ASIN). N53 carries N-linked (GlcNAc...) asparagine glycosylation. An intrachain disulfide couples C61 to C117. Residues D144, N146, and L161 each contribute to the Zn(2+) site. Disulfide bonds link C160/C217, C160/T219, C160/K220, C269/C322, P270/V323, A276/G329, C364/C405, C450/C506, C547/C596, C640/C694, V641/C694, V641/I695, and C736/C790. The N-linked (GlcNAc...) asparagine glycan is linked to N325. Residues N492 and N577 are each glycosylated (N-linked (GlcNAc...) asparagine). N820 is a glycosylation site (N-linked (GlcNAc...) asparagine). A disulfide bridge connects residues C833 and C890. Fibronectin type-III domains lie at 913–1007 (MPYA…TAEE), 1012–1116 (KPQN…TPSQ), 1117–1213 (PPSD…TEPD), and 1217–1310 (APTD…PSDQ). N-linked (GlcNAc...) asparagine glycans are attached at residues N1022, N1055, and N1186. Residues 1312-1394 (PAKIASFDDT…ENSIAKDSIT (83 aa)) enclose the Ig-like C2-type 10 domain. The cysteines at positions 1334 and 1382 are disulfide-linked. 2 Fibronectin type-III domains span residues 1402-1495 (PPQS…TKGQ) and 1499-1594 (LPEK…TGGT). Residues 1619-1639 (LVVPVVAALLVIIIAIIVICI) traverse the membrane as a helical segment. Residues 1640–2016 (LRSKGNHHKD…GFTAYDTMAV (377 aa)) lie on the Cytoplasmic side of the membrane. The PXXP motif 1; SH3-binding signature appears at 1685–1688 (PPVP). The disordered stretch occupies residues 1688–1719 (PGSNYNTCDRIKRGRGGLRSNHSTWDPRRNPN). The PXXP motif 2; SH3-binding motif lies at 1727-1730 (PPVP). Disordered regions lie at residues 1787–1846 (GHAG…DDPA) and 1862–2016 (SQGG…TMAV). Over residues 1826–1836 (KNSQGGQSSIY) the composition is skewed to polar residues. A YXXP motif 1; potential SH2-binding motif is present at residues 1842 to 1845 (YDDP). The YXXP motif 2; potential SH2-binding motif lies at 1875 to 1878 (YDDP). Residues 1897–1918 (GQPYDHYGSRGSMGRRSIGSAR) are compositionally biased toward low complexity. Residues 1925–1932 (PEPPPPPP) carry the Polyproline tract (probable SH3-binding) motif. Basic and acidic residues-rich tracts occupy residues 1944–1962 (DSKE…DHGP) and 1974–1993 (QPKD…RNET). Polar residues predominate over residues 1994–2004 (GPKQLQLQQAN).

As to quaternary structure, homodimer (via extracellular region); alternative splicing produces a potential 19,008 different ectodomains and the majority of these show strong isoform-specific homodimerization. Interacts (via cytoplasmic domain) with dock/dreadlocks (via SH2 and SH3 domains); the interaction is direct and may require Dscam1 to be phosphorylated. In terms of processing, phosphorylated on tyrosine residues in the intracellular domain. Tyrosine protein kinase Src42A and possibly Src64B are involved in this phosphorylation. Post-translationally, glycosylation on Asn-53 and Asn-325 is involved in stabilizing dimerization. Proteolytically processed, probably to generate a secreted form. In terms of tissue distribution, secreted into the hemolymph (at protein level). Expressed in brain and eye-antennal imaginal disks, including R3/R4 and R7 photoreceptor cells. Individual R3/R4 cells express between 14 and 50 randomly generated mRNAs encoding distinct isoforms.

It is found in the cell membrane. It localises to the cell projection. Its subcellular location is the neuron projection. The protein resides in the axon. The protein localises to the perikaryon. It is found in the dendrite. It localises to the secreted. In terms of biological role, cell surface receptor involved in guidance and targeting of growing nerve axons. Required during Bolwig's organ differentiation for accurate and efficient targeting of photoreceptor neuron axons to their synaptic targets in the brain via the P2 intermediate target neuron. Involved in isoneural self-avoidance during dendrite arborization but not in heteroneural recognition and repulsion during tiling by related neurons of the same class. Involved in regulating axon bifurcation and divergent extension in the developing mushroom body. Essential for axon arborisation in ellipsoid body. Exhibits an extraordinary level of molecular diversity resulting from alternative splicing. Isoforms differing in their ectodomain makeup show a high degree of functional redundancy while isoforms with different transmembrane domains are involved in different neuronal morphogenetic processes and are differentially targeted to dendrites or axons. The vast majority of isoforms exhibit strong isoform-specific homophilic binding. Individual cells express a distinct randomly generated repertoire of isoforms. Cell surfaces bearing identical repertoires of Dscam1 isoforms, such as those from the same cell, trigger recognition and avoidance. A subset of isoforms is expressed in fat body cells and hemocytes, cells that are part of the insect immune response, and these isoforms are secreted into the hemolymph. The secreted form comprising the ectodomain can bind to bacteria, such as Escherichia coli, and may act as an opsonin enhancing their phagocytosis by hemocytes. This is Cell adhesion molecule Dscam1 from Drosophila melanogaster (Fruit fly).